The following is a 158-amino-acid chain: MFRIGQGFDVHQLVEGRPLIIGGIEIPYEKGLLGHSDADVLLHTVADACLGAVGEGDIGKHFPDTDPEFKDADSFKLLQHVWGIVKQKGYVLGNIDCTIIAQKPKMLPYIEDMRKRIAEGLEADVSQVNVKATTTEKLGFTGRAEGIAAQATVLIQKG.

2 residues coordinate a divalent metal cation: aspartate 9 and histidine 11. 4-CDP-2-C-methyl-D-erythritol 2-phosphate contacts are provided by residues aspartate 9–histidine 11 and histidine 35–serine 36. Histidine 43 serves as a coordination point for a divalent metal cation. 4-CDP-2-C-methyl-D-erythritol 2-phosphate is bound by residues aspartate 57 to glycine 59, phenylalanine 62 to aspartate 66, alanine 101 to leucine 107, threonine 133 to glutamate 136, phenylalanine 140, and arginine 143.

It belongs to the IspF family. Homotrimer. It depends on a divalent metal cation as a cofactor.

It carries out the reaction 4-CDP-2-C-methyl-D-erythritol 2-phosphate = 2-C-methyl-D-erythritol 2,4-cyclic diphosphate + CMP. The protein operates within isoprenoid biosynthesis; isopentenyl diphosphate biosynthesis via DXP pathway; isopentenyl diphosphate from 1-deoxy-D-xylulose 5-phosphate: step 4/6. Involved in the biosynthesis of isopentenyl diphosphate (IPP) and dimethylallyl diphosphate (DMAPP), two major building blocks of isoprenoid compounds. Catalyzes the conversion of 4-diphosphocytidyl-2-C-methyl-D-erythritol 2-phosphate (CDP-ME2P) to 2-C-methyl-D-erythritol 2,4-cyclodiphosphate (ME-CPP) with a corresponding release of cytidine 5-monophosphate (CMP). This Bacillus subtilis (strain 168) protein is 2-C-methyl-D-erythritol 2,4-cyclodiphosphate synthase.